The sequence spans 429 residues: MDRIRIVGGAQLNGTIPISGAKNAALPLMIAALLSDETLILDNVPRLADVAQLQRILGNHGVDILSAGKRPGDHEYQGQTLHISAKNIIDTTAPYELVSKMRASFWVIAPLLARMHVAKVSLPGGCAIGTRPVDLLIMALEKLGASITIDGGYVVASCPGGLKGAEIEFPKVTVSGTHVALMAATLAKGTTFIGNAACEPEIVDVADCLNKMGAKILGAGTPRITVEGVAKLHGARHTVLPDRIETGTYAMAVAMTGGDVQLSGARPELLQSALDVLTEAGATITVNNDGIRVARNGAGINPVTVTTAPFPGFPTDLQAQLMALMTRAKGDSHITETIFENRFMHVQELARFGARIQLDGETATINGVEKLRGAPVMATDLRASVSLVIAALAAEGETMVNRIYHLDRGFERLEEKLSACGATIERISG.

22-23 is a phosphoenolpyruvate binding site; that stretch reads KN. Position 102 (R102) interacts with UDP-N-acetyl-alpha-D-glucosamine. The active-site Proton donor is C126. A 2-(S-cysteinyl)pyruvic acid O-phosphothioketal modification is found at C126. UDP-N-acetyl-alpha-D-glucosamine-binding positions include 131–135, D316, and I338; that span reads RPVDL.

This sequence belongs to the EPSP synthase family. MurA subfamily.

Its subcellular location is the cytoplasm. The catalysed reaction is phosphoenolpyruvate + UDP-N-acetyl-alpha-D-glucosamine = UDP-N-acetyl-3-O-(1-carboxyvinyl)-alpha-D-glucosamine + phosphate. It participates in cell wall biogenesis; peptidoglycan biosynthesis. In terms of biological role, cell wall formation. Adds enolpyruvyl to UDP-N-acetylglucosamine. This chain is UDP-N-acetylglucosamine 1-carboxyvinyltransferase, found in Rhodopseudomonas palustris (strain BisA53).